Here is a 137-residue protein sequence, read N- to C-terminus: Nucleoside diphosphate kinase (137 aa).

Residues Lys9, Phe57, Arg85, Thr91, and Arg102 each coordinate ATP. Residue His119 is the Pros-phosphohistidine intermediate of the active site.

Belongs to the NDK family. Homotetramer. Mg(2+) is required as a cofactor.

Its subcellular location is the cytoplasm. The enzyme catalyses a 2'-deoxyribonucleoside 5'-diphosphate + ATP = a 2'-deoxyribonucleoside 5'-triphosphate + ADP. The catalysed reaction is a ribonucleoside 5'-diphosphate + ATP = a ribonucleoside 5'-triphosphate + ADP. Functionally, major role in the synthesis of nucleoside triphosphates other than ATP. The ATP gamma phosphate is transferred to the NDP beta phosphate via a ping-pong mechanism, using a phosphorylated active-site intermediate. This is Nucleoside diphosphate kinase from Streptococcus thermophilus (strain CNRZ 1066).